The following is a 455-amino-acid chain: MTTSGHACPVPAVNGHMTHYPATPYPLLFPPVIGGLSLPPLHGLHGHPPPSGCSTPSPATIETQSTSSEELVPSPPSPLPPPRVYKPCFVCQDKSSGYHYGVSACEGCKGFFRRSIQKNMIYTCHRDKNCVINKVTRNRCQYCRLQKCFEVGMSKESVRNDRNKKKKETSKQECTESYEMTAELDDLTEKIRKAHQETFPSLCQLGKYTTNSSADHRVRLDLGLWDKFSELATKCIIKIVEFAKRLPGFTGLTIADQITLLKAACLDILILRICTRYTPEQDTMTFSDGLTLNRTQMHNAGFGPLTDLVFTFANQLLPLEMDDTETGLLSAICLICGDRQDLEEPTKVDKLQEPLLEALKIYIRKRRPSKPHMFPKILMKITDLRSISAKGAERVITLKMEIPGSMPPLIQEMLENSEGHEPLTPSSSGNTAEHSPSISPSSVENSGVSQSPLVQ.

The modulating stretch occupies residues Met-1–Pro-87. Residues His-47 to Pro-78 form a disordered region. Over residues Cys-53–Thr-66 the composition is skewed to polar residues. The residue at position 77 (Ser-77) is a Phosphoserine. 2 consecutive NR C4-type zinc fingers follow at residues Cys-88 to Cys-108 and Cys-124 to Cys-148. Residues Cys-88–Met-153 constitute a DNA-binding region (nuclear receptor). The tract at residues Ser-154–Ala-182 is hinge. Residues Glu-183–Ser-417 form the NR LBD domain. The tract at residues Glu-415–Gln-455 is disordered. A compositionally biased stretch (polar residues) spans Thr-424 to His-434. The span at Ser-435–Gln-455 shows a compositional bias: low complexity.

Belongs to the nuclear hormone receptor family. NR1 subfamily. Homodimer. Heterodimer; with a RXR molecule. Binds DNA preferentially as a RAR/RXR heterodimer. Heterodimerizes (via NR LBD) with RXRA. Interacts weakly with NCOR2. Expressed in aortic endothelial cells (at protein level).

The protein localises to the nucleus. The protein resides in the cytoplasm. Its function is as follows. Receptor for retinoic acid. Retinoic acid receptors bind as heterodimers to their target response elements in response to their ligands, all-trans or 9-cis retinoic acid, and regulate gene expression in various biological processes. The RXR/RAR heterodimers bind to the retinoic acid response elements (RARE) composed of tandem 5'-AGGTCA-3' sites known as DR1-DR5. In the absence or presence of hormone ligand, acts mainly as an activator of gene expression due to weak binding to corepressors. The RXRA/RARB heterodimer can act as a repressor on the DR1 element and as an activator on the DR5 element. In concert with RARG, required for skeletal growth, matrix homeostasis and growth plate function. This is Retinoic acid receptor beta (RARB) from Homo sapiens (Human).